Reading from the N-terminus, the 294-residue chain is MIKIYNRKTKAYDVEQVAGLKYINWSYASPIGKSFLELFIKKKMFSKLYGNFCDSPLSKKKIKAFIDEFNIDMSLCNKNIDEFENFNDFFARTLTPEARPIDYSENILISPGDGRLSAFENIDLDKVVQIKGYTYSLKELIDDPKVAEEFEGGTCLILRLCPTDYHRFHFVDSGTCSESKKISGFYYSVNPIALNNVSELFCKNKREWSIFTSDNFGEILHVEVGATCVGTILQTYSPEKRVKKGEEKGYFKFGGSTTILFFKKDTIKIDSDIVEQTKLGFETKVNMGETIGHK.

Catalysis depends on charge relay system; for autoendoproteolytic cleavage activity residues D113, H169, and S256. S256 acts as the Schiff-base intermediate with substrate; via pyruvic acid; for decarboxylase activity in catalysis. S256 bears the Pyruvic acid (Ser); by autocatalysis mark.

Belongs to the phosphatidylserine decarboxylase family. PSD-B subfamily. Prokaryotic type II sub-subfamily. As to quaternary structure, heterodimer of a large membrane-associated beta subunit and a small pyruvoyl-containing alpha subunit. Requires pyruvate as cofactor. Post-translationally, is synthesized initially as an inactive proenzyme. Formation of the active enzyme involves a self-maturation process in which the active site pyruvoyl group is generated from an internal serine residue via an autocatalytic post-translational modification. Two non-identical subunits are generated from the proenzyme in this reaction, and the pyruvate is formed at the N-terminus of the alpha chain, which is derived from the carboxyl end of the proenzyme. The autoendoproteolytic cleavage occurs by a canonical serine protease mechanism, in which the side chain hydroxyl group of the serine supplies its oxygen atom to form the C-terminus of the beta chain, while the remainder of the serine residue undergoes an oxidative deamination to produce ammonia and the pyruvoyl prosthetic group on the alpha chain. During this reaction, the Ser that is part of the protease active site of the proenzyme becomes the pyruvoyl prosthetic group, which constitutes an essential element of the active site of the mature decarboxylase.

It is found in the cell membrane. It catalyses the reaction a 1,2-diacyl-sn-glycero-3-phospho-L-serine + H(+) = a 1,2-diacyl-sn-glycero-3-phosphoethanolamine + CO2. The protein operates within phospholipid metabolism; phosphatidylethanolamine biosynthesis; phosphatidylethanolamine from CDP-diacylglycerol: step 2/2. Its function is as follows. Catalyzes the formation of phosphatidylethanolamine (PtdEtn) from phosphatidylserine (PtdSer). This Clostridium perfringens (strain SM101 / Type A) protein is Phosphatidylserine decarboxylase proenzyme.